Reading from the N-terminus, the 354-residue chain is MDTPLRRSRRLEGLKPESPENPTSVLRVRRVLVEFESNPKETGEPRSPPGLGSPSRQPETSPGSPSLPNGPALGSPRKQPELDSGSPEGHRDPGLNFPQNQPESSPESHLLQPKPSEESPKFSQNQGEADSELPKSKEEPTPGCPRHQLQQDSGSLEPFPGQKAPGPEPSKPLQELTPRSPGSPRDQHEPSKPPAAGEPAREGPAPKKREGSSAQAPASKKPKEEIPVIPKGKPKSGRVWKDRSKKRFSQMVQDKPLRTSWQRKMKDRQERKLAKDFARHLEEEKERRRQEKKKRRAENLRRRLENERKAEIVQVIRNPAKLKRAKKKQLRSIEKRDTLAQLQKQPPQRPATKV.

The disordered stretch occupies residues methionine 1 to valine 354. Phosphoserine occurs at positions 18 and 24. Basic and acidic residues predominate over residues valine 31 to glutamate 44. Phosphoserine occurs at positions 47 and 53. Over residues proline 49–proline 58 the composition is skewed to low complexity. Threonine 60 carries the phosphothreonine modification. 8 positions are modified to phosphoserine: serine 61, serine 64, serine 75, serine 86, serine 105, serine 108, serine 123, and serine 183. A compositionally biased stretch (polar residues) spans phenylalanine 97 to glutamate 107. The span at proline 199–glycine 211 shows a compositional bias: basic and acidic residues. Residues serine 212 and serine 213 each carry the phosphoserine modification. A compositionally biased stretch (basic residues) spans glycine 232–phenylalanine 248. Basic and acidic residues-rich tracts occupy residues aspartate 267–arginine 289 and alanine 297–glutamate 311. Residues alanine 274–arginine 317 adopt a coiled-coil conformation. Basic residues predominate over residues alanine 320–leucine 330. Residue arginine 336 is modified to Citrulline.

In terms of processing, citrullinated by PADI4.

The protein resides in the nucleus. It is found in the chromosome. Its subcellular location is the nucleolus. Required for proper chromosome segregation during mitosis and error-free mitotic progression. The polypeptide is Coiled-coil domain-containing protein 86 (Bos taurus (Bovine)).